Here is a 447-residue protein sequence, read N- to C-terminus: Probable glycosyltransferase 7 (447 aa).

Residues 1–31 form a disordered region; it reads MRATTGARHLHPPWRRGLRHHRQSTMPPRAS. Over 1 to 37 the chain is Cytoplasmic; that stretch reads MRATTGARHLHPPWRRGLRHHRQSTMPPRASRGRLAD. Residues 8-23 show a composition bias toward basic residues; sequence RHLHPPWRRGLRHHRQ. Residues 38–60 form a helical; Signal-anchor for type II membrane protein membrane-spanning segment; sequence AALFTAGAVLGSVLLLTLASPFS. The Lumenal portion of the chain corresponds to 61 to 447; the sequence is SSSSPSSGVG…LPFDHPTQTA (387 aa). Residues N285 and N329 are each glycosylated (N-linked (GlcNAc...) asparagine).

Belongs to the glycosyltransferase 34 family.

It is found in the golgi apparatus membrane. Functionally, probable glycosyltransferase that may be involved in the biosynthesis of xyloglucan. The sequence is that of Probable glycosyltransferase 7 from Oryza sativa subsp. indica (Rice).